The following is a 112-amino-acid chain: HTH-type transcriptional regulator YodB (112 aa).

In terms of domain architecture, HTH hxlR-type spans 6–105; sequence CPKMESAFSL…WADQFCEPGD (100 aa).

Functionally, negatively regulates yodC and azoR1 which may contribute to the degradation of aromatic compounds. Probably positively regulates the catechol-specific transcription of mhqNOP, mhqED, and mhqA. The sequence is that of HTH-type transcriptional regulator YodB (yodB) from Bacillus subtilis (strain 168).